A 192-amino-acid polypeptide reads, in one-letter code: Putative manganese efflux pump MntP (192 aa).

The next 6 membrane-spanning stretches (helical) occupy residues phenylalanine 3–alanine 23, valine 36–leucine 56, valine 65–leucine 85, phenylalanine 112–leucine 132, phenylalanine 136–phenylalanine 156, and leucine 171–leucine 191.

Belongs to the MntP (TC 9.B.29) family.

It localises to the cell inner membrane. In terms of biological role, probably functions as a manganese efflux pump. The polypeptide is Putative manganese efflux pump MntP (Sorangium cellulosum (strain So ce56) (Polyangium cellulosum (strain So ce56))).